We begin with the raw amino-acid sequence, 117 residues long: Large ribosomal subunit protein eL34 (117 aa).

Belongs to the eukaryotic ribosomal protein eL34 family. As to quaternary structure, component of the large ribosomal subunit.

It is found in the cytoplasm. It localises to the cytosol. Its subcellular location is the endoplasmic reticulum. Component of the large ribosomal subunit. The ribosome is a large ribonucleoprotein complex responsible for the synthesis of proteins in the cell. This Ictalurus punctatus (Channel catfish) protein is Large ribosomal subunit protein eL34 (rpl34).